Consider the following 364-residue polypeptide: Geissoschizine synthase (364 aa).

Cys-51 lines the Zn(2+) pocket. Asn-52 is a binding site for NADP(+). Positions 73, 74, 104, 107, 110, 118, and 168 each coordinate Zn(2+). Positions 194, 196, 197, 216, 217, 218, 221, 261, 280, 282, 304, 306, and 351 each coordinate NADP(+).

It belongs to the zinc-containing alcohol dehydrogenase family. Class-III subfamily. As to quaternary structure, homodimer. The cofactor is Zn(2+). As to expression, expressed in leaf epidermis.

It catalyses the reaction (19E)-geissoschizine + NADP(+) = 4,21-dehydrogeissoschizine + NADPH. The protein operates within alkaloid biosynthesis. Component of the seco-iridoid and derivatives monoterpenoid indole alkaloids (MIAs, e.g. catharanthine, tabersonine, vincadifformine, vindoline, vincristine, quinine and strychnine) biosynthesis pathway. During the conversion of strictosidine aglycone to geissoschizine, catalyzes iminium reduction on 4,21-dehydrogeissoschizine to produce 19E-geissoschizine, precursor of catharanthine and tabersonine derivatives. May also trigger the production of reactive intermediate used by the HL1, HL2, HL3 and HL4 to form catharanthine, vincadifformine and tabersonine. The sequence is that of Geissoschizine synthase from Catharanthus roseus (Madagascar periwinkle).